The chain runs to 252 residues: Trans-aconitate 2-methyltransferase (252 aa).

Belongs to the methyltransferase superfamily. Tam family.

Its subcellular location is the cytoplasm. It carries out the reaction trans-aconitate + S-adenosyl-L-methionine = (E)-3-(methoxycarbonyl)pent-2-enedioate + S-adenosyl-L-homocysteine. Its function is as follows. Catalyzes the S-adenosylmethionine monomethyl esterification of trans-aconitate. This Escherichia coli (strain SE11) protein is Trans-aconitate 2-methyltransferase.